The primary structure comprises 254 residues: Cdc42 effector protein 3 (254 aa).

The CRIB domain occupies 31-45; sequence ISPPLGDFRHTIHIG. A Phosphotyrosine modification is found at Tyr-63. Phosphoserine occurs at positions 89, 108, and 144. Residues 165-205 form a disordered region; it reads VHQGDTSWGSSGSGSQSSQGRDSHSSSLSEQSSDWPADDMF. The span at 171–197 shows a compositional bias: low complexity; it reads SWGSSGSGSQSSQGRDSHSSSLSEQSS.

The protein belongs to the BORG/CEP family. In terms of assembly, interacts with RHOQ and CDC42, in a GTP-dependent manner, and with SEPT7.

Its subcellular location is the endomembrane system. The protein resides in the cytoplasm. The protein localises to the cytoskeleton. In terms of biological role, probably involved in the organization of the actin cytoskeleton. May act downstream of CDC42 to induce actin filament assembly leading to cell shape changes. Induces pseudopodia formation in fibroblasts. This chain is Cdc42 effector protein 3 (Cdc42ep3), found in Mus musculus (Mouse).